The sequence spans 312 residues: Ribonuclease HIII (312 aa).

The RNase H type-2 domain maps to methionine 95–lysine 312. Residues aspartate 101, glutamate 102, and aspartate 206 each coordinate a divalent metal cation.

Belongs to the RNase HII family. RnhC subfamily. The cofactor is Mn(2+). Mg(2+) is required as a cofactor.

The protein localises to the cytoplasm. The enzyme catalyses Endonucleolytic cleavage to 5'-phosphomonoester.. Functionally, endonuclease that specifically degrades the RNA of RNA-DNA hybrids. This Bacillus mycoides (strain KBAB4) (Bacillus weihenstephanensis) protein is Ribonuclease HIII.